We begin with the raw amino-acid sequence, 310 residues long: Bis(hydroxyethyl) terephthalate hydrolase (310 aa).

The segment at residues 1–48 is a signal peptide (tat-type signal); the sequence is MQQNPHTHAAPGAARPVLRGVRRRLAAVTAAVAAVLVLGTLTGPGAQA. Phe111 provides a ligand contact to bis(2-hydroxyethyl) terephthalate. Ser179 acts as the Nucleophile in catalysis. Residues Met180 and Trp204 each coordinate bis(2-hydroxyethyl) terephthalate. Active-site charge relay system residues include Asp225 and His257. Cys290 and Cys306 are oxidised to a cystine.

This sequence belongs to the AB hydrolase superfamily. In terms of processing, predicted to be exported by the Tat system. The position of the signal peptide cleavage has not been experimentally proven.

It is found in the secreted. The enzyme catalyses bis(2-hydroxyethyl) terephthalate + H2O = 4-[(2-hydroxyethoxy)carbonyl]benzoate + ethylene glycol + H(+). Functionally, catalyzes the degradation of bis(hydroxyethyl) terephthalate (BHET), a derived-oligomer of the plastic poly(ethylene terephthalate) (PET), hydrolyzing BHET to mono(2-hydroxyethyl) terephthalate (MHET). Shows no activity against PET. This is Bis(hydroxyethyl) terephthalate hydrolase from Streptomyces coelicolor (strain ATCC BAA-471 / A3(2) / M145).